Here is a 473-residue protein sequence, read N- to C-terminus: Glutamyl-tRNA reductase (473 aa).

Substrate contacts are provided by residues 49–52 (TCNR), S109, 114–116 (EQQ), and Q120. C50 serves as the catalytic Nucleophile. An NADP(+)-binding site is contributed by 189–194 (GAGSMG). Residues 445–473 (SGLDAGSGPQGADGPSAGPTPSAPNPSAE) form a disordered region.

It belongs to the glutamyl-tRNA reductase family. As to quaternary structure, homodimer.

It catalyses the reaction (S)-4-amino-5-oxopentanoate + tRNA(Glu) + NADP(+) = L-glutamyl-tRNA(Glu) + NADPH + H(+). It participates in porphyrin-containing compound metabolism; protoporphyrin-IX biosynthesis; 5-aminolevulinate from L-glutamyl-tRNA(Glu): step 1/2. Functionally, catalyzes the NADPH-dependent reduction of glutamyl-tRNA(Glu) to glutamate 1-semialdehyde (GSA). The protein is Glutamyl-tRNA reductase of Mycobacterium ulcerans (strain Agy99).